Consider the following 342-residue polypeptide: Signaling lymphocytic activation molecule (342 aa).

The first 26 residues, 1–26 (MDSRGFLSLRCLLVLALASKLSCGTG), serve as a signal peptide directing secretion. Residues 27–237 (ESLMNCPEVP…CRPESSVPRQ (211 aa)) lie on the Extracellular side of the membrane. An Ig-like V-type domain is found at 29–138 (LMNCPEVPGK…QHFCLQLKLY (110 aa)). Residues Asn57, Asn102, Asn125, Asn150, Asn157, Asn189, and Asn217 are each glycosylated (N-linked (GlcNAc...) asparagine). One can recognise an Ig-like C2-type domain in the interval 144–223 (PEIKVLNWTQ…PVSNRSWSFN (80 aa)). Disulfide bonds link Cys158/Cys228 and Cys164/Cys209. The chain crosses the membrane as a helical span at residues 238 to 261 (WRLYAGLFLGGIVGVILIFEVVLL). At 262–342 (LLRRRGKTNH…VYASVTFPES (81 aa)) the chain is on the cytoplasmic side. The ITSM 1 signature appears at 282-287 (TIYAQV). A phosphotyrosine; by FYN mark is found at Tyr284, Tyr310, and Tyr334. An SH2-binding motif is present at residues 310–315 (YVAATE). The ITSM 2 signature appears at 332–337 (TVYASV).

Interacts (via cytoplasmic domain) with SH2D1A and SH2D1B; SH2D1A mediates association with FYN. Interacts (via cytoplasmic domain phosphorylated on tyrosine residues) with INPP5D and PTPN11; presence of SH2D1A facilitates binding to INPP5D. Interacts with MAP4K1. Interacts with PIK3C3, BECN1 and UVRAG; indicative for an association with PI3K complex II (PI3KC3-C2). Interacts with canine distemper virus HN protein; suggesting that it may serve as a receptor. In terms of processing, phosphorylated on tyrosine residues by FYN.

The protein localises to the cell membrane. Self-ligand receptor of the signaling lymphocytic activation molecule (SLAM) family. SLAM receptors triggered by homo- or heterotypic cell-cell interactions are modulating the activation and differentiation of a wide variety of immune cells and thus are involved in the regulation and interconnection of both innate and adaptive immune response. Activities are controlled by presence or absence of small cytoplasmic adapter proteins, SH2D1A/SAP and/or SH2D1B/EAT-2. SLAMF1-induced signal-transduction events in T-lymphocytes are different from those in B-cells. Two modes of SLAMF1 signaling seem to exist: one depending on SH2D1A (and perhaps SH2D1B) and another in which protein-tyrosine phosphatase 2C (PTPN11)-dependent signal transduction operates. Initially it has been proposed that association with SH2D1A prevents binding to inhibitory effectors including INPP5D/SHIP1 and PTPN11/SHP-2. However, signaling is also regulated by SH2D1A which can simultaneously interact with and recruit FYN which subsequently phosphorylates and activates SLAMF1. Mediates IL-2-independent proliferation of activated T cells during immune responses and induces IFN-gamma production. Downstreaming signaling involves INPP5D/SHIP1, DOK1 and DOK2 leading to inhibited IFN-gamma production in T-cells, and PRKCQ, BCL10 and NFKB1 leading to increased T-cell activation and Th2 cytokine production. Promotes T-cell receptor-induced IL-4 secretion by CD4(+) cells. Inhibits antigen receptor-mediated production of IFN-gamma, but not IL-2, in CD4(-)/CD8(-) T-cells. Required for IL-4 production by germinal centers T follicular helper (T(Fh))cells. May inhibit CD40-induced signal transduction in monocyte-derived dendritic cells. May play a role in allergic responses and may regulate allergen-induced Th2 cytokine and Th1 cytokine secretion. In conjunction with SLAMF6 controls the transition between positive selection and the subsequent expansion and differentiation of the thymocytic natural killer T (NKT) cell lineage. Involved in the peripheral differentiation of indifferent natural killer T (iNKT) cells toward a regulatory NKT2 type. In macrophages involved in down-regulation of IL-12, TNF-alpha and nitric oxide in response to lipopolysaccharide (LPS). In B-cells activates the ERK signaling pathway independently of SH2D1A but implicating both, SYK and INPP5D, and activates Akt signaling dependent on SYK and SH2D1A. In conjunction with SLAMF5 and SLAMF6 may be a negative regulator of the humoral immune response. This chain is Signaling lymphocytic activation molecule (SLAMF1), found in Canis lupus familiaris (Dog).